We begin with the raw amino-acid sequence, 1182 residues long: WD repeat-containing protein on Y chromosome (1182 aa).

8 WD repeats span residues 155–199 (EEIT…LRSA), 323–362 (RIPLGVSVFYVSEIKNILVTGGPDTFVRIWDVYISSEPSA), 366–405 (GHNGGIVAVFVQPEENKVYSVDYHKIIKVWDLQEHTLLQT), 456–495 (THAAPVSVVLYNRLFRNIVTCGLDSYIIVWDPWTGRRKII), 508–547 (TIDIEITAACFDPLEQFLLTGARDGSLKIWNYNNAVVVRN), 595–635 (FHTD…RRYN), 740–779 (KTGDCVLTMATDRKNRFLYTGTAFGYIKVWHIVNYCIPKA), and 823–862 (GHLKAINSIGFINLPKIIFSGSHDYSCRLWTQGGRYLGTL). Residues 1031–1182 (TKAGANLDQP…PKAKTDRETH (152 aa)) are disordered. 2 stretches are compositionally biased toward low complexity: residues 1079–1092 (GVSSGYGKVSVSQG) and 1103–1121 (TTSLSKPKTSSSPSKPKGS).

The chain is WD repeat-containing protein on Y chromosome from Drosophila virilis (Fruit fly).